The chain runs to 337 residues: Ornithine carbamoyltransferase, catabolic (337 aa).

Residues 57–60 (STRT), Gln-84, Arg-108, and 135–138 (HPTQ) each bind carbamoyl phosphate. L-ornithine contacts are provided by residues Asn-167, Asp-231, and 235 to 236 (SM). Carbamoyl phosphate-binding positions include 272–273 (CL) and Arg-317.

It belongs to the aspartate/ornithine carbamoyltransferase superfamily. OTCase family.

The protein resides in the cytoplasm. The enzyme catalyses carbamoyl phosphate + L-ornithine = L-citrulline + phosphate + H(+). The protein operates within amino-acid degradation; L-arginine degradation via ADI pathway; carbamoyl phosphate from L-arginine: step 2/2. Reversibly catalyzes the transfer of the carbamoyl group from carbamoyl phosphate (CP) to the N(epsilon) atom of ornithine (ORN) to produce L-citrulline. In Streptococcus pyogenes serotype M1, this protein is Ornithine carbamoyltransferase, catabolic (arcB).